The primary structure comprises 132 residues: Small ribosomal subunit protein uS11 (132 aa).

The protein belongs to the universal ribosomal protein uS11 family. In terms of assembly, part of the 30S ribosomal subunit. Interacts with proteins S7 and S18. Binds to IF-3.

Functionally, located on the platform of the 30S subunit, it bridges several disparate RNA helices of the 16S rRNA. Forms part of the Shine-Dalgarno cleft in the 70S ribosome. The polypeptide is Small ribosomal subunit protein uS11 (Dichelobacter nodosus (strain VCS1703A)).